The primary structure comprises 210 residues: Putative RING-H2 finger protein ATL50 (210 aa).

A helical transmembrane segment spans residues 35 to 55 (IVLLYITLLSIIFFVAALIHL). The RING-type; atypical zinc finger occupies 122-164 (CAVCLREFTAEDELRLLPKCSHAFHVECIDTWLLTNSTCPLCR). The segment at 187–210 (SDGDNSQDSDSSFMLTDLDDVESK) is disordered.

The protein belongs to the RING-type zinc finger family. ATL subfamily.

Its subcellular location is the membrane. It carries out the reaction S-ubiquitinyl-[E2 ubiquitin-conjugating enzyme]-L-cysteine + [acceptor protein]-L-lysine = [E2 ubiquitin-conjugating enzyme]-L-cysteine + N(6)-ubiquitinyl-[acceptor protein]-L-lysine.. Its pathway is protein modification; protein ubiquitination. This chain is Putative RING-H2 finger protein ATL50 (ATL50), found in Arabidopsis thaliana (Mouse-ear cress).